We begin with the raw amino-acid sequence, 239 residues long: DNA repair protein RecO (239 aa).

The protein belongs to the RecO family.

In terms of biological role, involved in DNA repair and RecF pathway recombination. This is DNA repair protein RecO from Christiangramia forsetii (strain DSM 17595 / CGMCC 1.15422 / KT0803) (Gramella forsetii).